Here is a 66-residue protein sequence, read N- to C-terminus: Beta-toxin ChFII.7 (66 aa).

The 66-residue stretch at 1–66 (KEGYLVNHST…VWPLPKKTCN (66 aa)) folds into the LCN-type CS-alpha/beta domain. Intrachain disulfides connect cysteine 12/cysteine 65, cysteine 16/cysteine 41, cysteine 25/cysteine 46, and cysteine 29/cysteine 48. At asparagine 66 the chain carries Asparagine amide.

In terms of tissue distribution, expressed by the venom gland.

Its subcellular location is the secreted. Functionally, beta toxins bind voltage independently at site-4 of sodium channels (Nav) and shift the activation voltage toward more negative potentials, thereby affecting sodium channel activation CC and promoting spontaneous and repetitive firing. In Centruroides hirsutipalpus (Scorpion), this protein is Beta-toxin ChFII.7.